Here is a 480-residue protein sequence, read N- to C-terminus: Acetyl-coenzyme A carboxylase carboxyl transferase subunit beta, chloroplastic (480 aa).

The disordered stretch occupies residues 25 to 48 (TSSLGPIENASESKDPNINDTDKN). The segment covering 35–47 (SESKDPNINDTDK) has biased composition (basic and acidic residues). Positions 216-480 (LWVQCENCYG…LHTFFPLNQN (265 aa)) constitute a CoA carboxyltransferase N-terminal domain. Residues C220, C223, C239, and C242 each contribute to the Zn(2+) site. The segment at 220-242 (CENCYGLNYKKFFKSKMNLCEQC) adopts a C4-type zinc-finger fold.

The protein belongs to the AccD/PCCB family. Acetyl-CoA carboxylase is a heterohexamer composed of biotin carboxyl carrier protein, biotin carboxylase and 2 subunits each of ACCase subunit alpha and ACCase plastid-coded subunit beta (accD). Zn(2+) is required as a cofactor.

The protein localises to the plastid. Its subcellular location is the chloroplast stroma. The enzyme catalyses N(6)-carboxybiotinyl-L-lysyl-[protein] + acetyl-CoA = N(6)-biotinyl-L-lysyl-[protein] + malonyl-CoA. Its pathway is lipid metabolism; malonyl-CoA biosynthesis; malonyl-CoA from acetyl-CoA: step 1/1. Component of the acetyl coenzyme A carboxylase (ACC) complex. Biotin carboxylase (BC) catalyzes the carboxylation of biotin on its carrier protein (BCCP) and then the CO(2) group is transferred by the transcarboxylase to acetyl-CoA to form malonyl-CoA. The protein is Acetyl-coenzyme A carboxylase carboxyl transferase subunit beta, chloroplastic of Helianthus annuus (Common sunflower).